Reading from the N-terminus, the 428-residue chain is MLKGPLKGCLNMSKKVIVIAGTTGVGKSQLSIQLAQKFNGEVINSDSMQVYKDIPIITNKHPLQEREGIPHHVMNHVDWSEEYYSHRFETECMNAIEDIHRRGKIPIVVGGTHYYLQTLFNKRVDTKSSERKLTRKQLDILESTDPDVIYNTLVKCDPDIATKYHPNDYRRVQRMLEIYYKTGKKPSETFNEQKITLKFDTLFLWLYSKPEPLFQRLDDRVDDMLERGALQEIKQLYEYYSQNKFTPEQCENGVWQVIGFKEFLPWLTGKTDDNTVKLEDCIERMKTRTRQYAKRQVKWIKKMLIPDIKGDIYLLDATDLSQWDTNASQRAIAISNDFISNRPIKQERAPKALEELLSKGETTMKKLDDWTHYTCNVCRNADGKNVVAIGEKYWKIHLGSRRHKSNLKRNTRQADFEKWKINKKETVE.

Residue 21-28 (GTTGVGKS) coordinates ATP. 23–28 (TGVGKS) lines the dimethylallyl diphosphate pocket. Interaction with substrate tRNA regions lie at residues 46–49 (DSMQ) and 170–174 (RRVQR). The core aggregation region stretch occupies residues 199–207 (FDTLFLWLY). The tract at residues 210 to 232 (PEPLFQRLDDRVDDMLERGALQE) is interaction with isopentenylpyrophosphate transferase. Interaction with substrate tRNA regions lie at residues 256–258 (QVI) and 284–302 (RMKTRTRQYAKRQVKWIKK). The Matrin-type zinc-finger motif lies at 373 to 409 (YTCNVCRNADGKNVVAIGEKYWKIHLGSRRHKSNLKR). Zn(2+) is bound by residues C375, C378, H397, and H403.

It belongs to the IPP transferase family.

It is found in the cytoplasm. The protein localises to the mitochondrion. It localises to the nucleus. It carries out the reaction adenosine(37) in tRNA + dimethylallyl diphosphate = N(6)-dimethylallyladenosine(37) in tRNA + diphosphate. Catalyzes the transfer of a dimethylallyl group onto the adenine at position 37 in the anticodon loop on a specific subset of tRNAs both in the cytosol and the mitochondrion, leading to the formation of N6-(dimethylallyl)adenosine (i(6)A). This modification optimizes the codon:anticodon fit in the ribosome and promotes translational fidelity. Competes with the farnesyl pyrophosphate synthase ERG20 for the common substrate dimethylallyl diphosphate (DMAPP). The chain is tRNA dimethylallyltransferase (MOD5) from Saccharomyces cerevisiae (strain ATCC 204508 / S288c) (Baker's yeast).